The chain runs to 330 residues: Malate dehydrogenase (330 aa).

Residue 15-21 (GGTGQIA) coordinates NAD(+). Positions 96 and 102 each coordinate substrate. Residues Asn-109, Gln-116, and 133–135 (VGN) each bind NAD(+). Substrate-binding residues include Asn-135 and Arg-166. The active-site Proton acceptor is His-191.

It belongs to the LDH/MDH superfamily. MDH type 2 family.

It catalyses the reaction (S)-malate + NAD(+) = oxaloacetate + NADH + H(+). Catalyzes the reversible oxidation of malate to oxaloacetate. This is Malate dehydrogenase from Chlamydia caviae (strain ATCC VR-813 / DSM 19441 / 03DC25 / GPIC) (Chlamydophila caviae).